Reading from the N-terminus, the 248-residue chain is Protein maestro (248 aa).

Residues 1–20 form a disordered region; sequence MDQRQRRILGQPLSIPTSQP. HEAT repeat units follow at residues 44–79 and 128–163; these read EPLKNVLFILAERARDPNANKRHTAMRGLGTMAREA and SFFIDITLQTRTLLDDENDSLRYSAFVLFGQLAAFA.

The protein resides in the nucleus. It is found in the nucleolus. The sequence is that of Protein maestro (MRO) from Macaca fascicularis (Crab-eating macaque).